Here is a 52-residue protein sequence, read N- to C-terminus: Disintegrin multisquamatin (52 aa).

The Disintegrin domain occupies 1-50; it reads EGEECESGPCCRNCKFLKEGTICKRARGDDMDDYCNGKTCDCPRNPHKGP. Disulfide bonds link cysteine 5-cysteine 14, cysteine 10-cysteine 35, cysteine 11-cysteine 40, and cysteine 23-cysteine 42. The Cell attachment site motif lies at 27-29; it reads RGD.

The protein belongs to the venom metalloproteinase (M12B) family. P-II subfamily. P-IIa sub-subfamily. As to quaternary structure, monomer. As to expression, expressed by the venom gland.

The protein resides in the secreted. In terms of biological role, inhibits ADP-induced human, canine and rabbit platelet aggregation by binding with high affinity to alpha-IIb/beta-3 (ITGA2B/ITGB3). This is Disintegrin multisquamatin from Echis multisquamatus (Central Asian sand viper).